We begin with the raw amino-acid sequence, 340 residues long: Methionine import ATP-binding protein MetN (340 aa).

The region spanning 6-245 (IEFEGITKVF…PQTNVAKRFV (240 aa)) is the ABC transporter domain. Position 42–49 (42–49 (GYSGAGKS)) interacts with ATP.

The protein belongs to the ABC transporter superfamily. Methionine importer (TC 3.A.1.24) family. The complex is composed of two ATP-binding proteins (MetN), two transmembrane proteins (MetI) and a solute-binding protein (MetQ).

The protein resides in the cell membrane. It carries out the reaction L-methionine(out) + ATP + H2O = L-methionine(in) + ADP + phosphate + H(+). The enzyme catalyses D-methionine(out) + ATP + H2O = D-methionine(in) + ADP + phosphate + H(+). Functionally, part of the ABC transporter complex MetNIQ involved in methionine import. Responsible for energy coupling to the transport system. This chain is Methionine import ATP-binding protein MetN, found in Corynebacterium diphtheriae (strain ATCC 700971 / NCTC 13129 / Biotype gravis).